Consider the following 200-residue polypeptide: MSAAPTDAKSVKLVVVGDGAVGKTCLLICYTTNEFPKDYVPTVFDNYMAPMTVDGEPINLGLWDTAGQEDYEQLRPLSYPNTDLFLLCFSVISRTSFNNISSKWLPEIKHYEPKCKMMVVGTKTDCRNDEAMIRKLADENQKPITTEEGEKLAKDIKAICYMECSALTRSGLNQVFDEAIHIVLNKNQSSKKSSKKCALL.

Alanine 20, glycine 22, lysine 23, threonine 24, cysteine 25, tyrosine 39, and threonine 42 together coordinate GTP. Threonine 24 contacts Mg(2+). 2 short sequence motifs (switch) span residues 33–44 and 64–82; these read NEFPKDYVPTVF and DTAG…YPNT. Residue threonine 42 coordinates Mg(2+). Lysine 123, aspartate 125, and alanine 166 together coordinate GTP. Position 197 is a cysteine methyl ester (cysteine 197). Residue cysteine 197 is the site of S-geranylgeranyl cysteine attachment. The propeptide at 198 to 200 is removed in mature form; the sequence is ALL.

The protein belongs to the small GTPase superfamily. Rho family. The cofactor is Mg(2+).

It is found in the cell membrane. It localises to the cytoplasm. The protein resides in the cytoskeleton. It carries out the reaction GTP + H2O = GDP + phosphate + H(+). With respect to regulation, regulated by guanine nucleotide exchange factors (GEFs) which promote the exchange of bound GDP for free GTP, GTPase activating proteins (GAPs) which increase the GTP hydrolysis activity, and GDP dissociation inhibitors which inhibit the dissociation of the nucleotide from the GTPase. Its function is as follows. Small GTPase which cycles between active GTP-bound and inactive GDP-bound states. This Entamoeba histolytica (strain ATCC 30459 / HM-1:IMSS / ABRM) protein is Rho-related protein racD.